The chain runs to 364 residues: Lipoyl synthase, mitochondrial (364 aa).

7 residues coordinate [4Fe-4S] cluster: Cys99, Cys104, Cys110, Cys130, Cys134, Cys137, and Ser345. Positions 116-334 constitute a Radical SAM core domain; the sequence is HSTQTATIML…EQRGNELGFL (219 aa).

Belongs to the radical SAM superfamily. Lipoyl synthase family. The cofactor is [4Fe-4S] cluster.

The protein localises to the mitochondrion. It carries out the reaction [[Fe-S] cluster scaffold protein carrying a second [4Fe-4S](2+) cluster] + N(6)-octanoyl-L-lysyl-[protein] + 2 oxidized [2Fe-2S]-[ferredoxin] + 2 S-adenosyl-L-methionine + 4 H(+) = [[Fe-S] cluster scaffold protein] + N(6)-[(R)-dihydrolipoyl]-L-lysyl-[protein] + 4 Fe(3+) + 2 hydrogen sulfide + 2 5'-deoxyadenosine + 2 L-methionine + 2 reduced [2Fe-2S]-[ferredoxin]. The protein operates within protein modification; protein lipoylation via endogenous pathway; protein N(6)-(lipoyl)lysine from octanoyl-[acyl-carrier-protein]: step 2/2. Functionally, catalyzes the radical-mediated insertion of two sulfur atoms into the C-6 and C-8 positions of the octanoyl moiety bound to the lipoyl domains of lipoate-dependent enzymes, thereby converting the octanoylated domains into lipoylated derivatives. The sequence is that of Lipoyl synthase, mitochondrial from Drosophila mojavensis (Fruit fly).